The primary structure comprises 102 residues: Small ribosomal subunit protein uS10 (102 aa).

It belongs to the universal ribosomal protein uS10 family. In terms of assembly, part of the 30S ribosomal subunit.

Its function is as follows. Involved in the binding of tRNA to the ribosomes. This chain is Small ribosomal subunit protein uS10, found in Streptococcus thermophilus (strain CNRZ 1066).